The following is a 126-amino-acid chain: Fluoride-specific ion channel FluC 2 (126 aa).

The next 4 membrane-spanning stretches (helical) occupy residues 7-27 (MWVG…GLSI), 37-57 (LGTF…SILF), 65-85 (YGDL…TTFS), and 101-121 (AIAA…AAFG). Na(+)-binding residues include G79 and T82.

This sequence belongs to the fluoride channel Fluc/FEX (TC 1.A.43) family.

It is found in the cell inner membrane. It carries out the reaction fluoride(in) = fluoride(out). Its activity is regulated as follows. Na(+) is not transported, but it plays an essential structural role and its presence is essential for fluoride channel function. Functionally, fluoride-specific ion channel. Important for reducing fluoride concentration in the cell, thus reducing its toxicity. This Yersinia pseudotuberculosis serotype I (strain IP32953) protein is Fluoride-specific ion channel FluC 2.